Here is a 403-residue protein sequence, read N- to C-terminus: MLLPFPATMISEVEQPKEKRSLSSEPPSLMSLPYEIIENILARISKWSYPNLSLVSKSFLSLLSSPQLYKTRSEIGTTEPCLYFCLESANHSSPQWYTLWMKPDETLTGTGTIHDYSLIPLPSSSPVLRTSTVAVGSEIYVIGGHFNRSSSVRIFDCRSNTWRDGPNMTVARSDPVAVLIDQRIYVLGGREMDESDDWFEVFDIKTQTWRALPSFRAGLELRRYIVWPNRYFPRLGDSQTAVRLINVNPNALEGKLYVAAQINDYTYEPKDDTWKVVSKSSIRRVKVWCVIENVMYACHDVFLRWYDYEDRRWREIQGLEELCYHPTRGFSGAERIVNYGGKLVVMWRPVQSDGKDKIEIWCAQIALEKRSKDEIWGKIEWINSVLTVPKLCDLCYSCVVVSI.

Residues 26–72 form the F-box domain; that stretch reads PPSLMSLPYEIIENILARISKWSYPNLSLVSKSFLSLLSSPQLYKTR. Kelch repeat units lie at residues 138 to 182, 184 to 229, 248 to 294, and 296 to 340; these read EIYV…LIDQ, IYVL…VWPN, NPNA…IENV, and YACH…VNYG.

This Arabidopsis thaliana (Mouse-ear cress) protein is F-box/kelch-repeat protein At5g39560.